A 287-amino-acid polypeptide reads, in one-letter code: Ribosomal RNA small subunit methyltransferase A (287 aa).

S-adenosyl-L-methionine contacts are provided by asparagine 18, leucine 20, glycine 45, glutamate 66, aspartate 91, and asparagine 118.

This sequence belongs to the class I-like SAM-binding methyltransferase superfamily. rRNA adenine N(6)-methyltransferase family. RsmA subfamily.

Its subcellular location is the cytoplasm. It catalyses the reaction adenosine(1518)/adenosine(1519) in 16S rRNA + 4 S-adenosyl-L-methionine = N(6)-dimethyladenosine(1518)/N(6)-dimethyladenosine(1519) in 16S rRNA + 4 S-adenosyl-L-homocysteine + 4 H(+). Specifically dimethylates two adjacent adenosines (A1518 and A1519) in the loop of a conserved hairpin near the 3'-end of 16S rRNA in the 30S particle. May play a critical role in biogenesis of 30S subunits. This Haemophilus influenzae (strain ATCC 51907 / DSM 11121 / KW20 / Rd) protein is Ribosomal RNA small subunit methyltransferase A.